The following is a 360-amino-acid chain: MIIWLAELLQPHFSFFRLFEYLSFRAIASILTALCLSLWMGPRLIERLQMLQIGQVVRNDGPESHFSKRGTPTMGGVMILAAIIITVLMWADLSNPYVWAVLVVLAGYGAVGFVDDYRKVVRKNTDGLIARWKYFWQSAIALVVAFALYAHGHDTAATQLVVPFFKDVMPQLGLLYIVLTYFVIVGTSNAVNLTDGLDGLAIMPTVMVAAGFAVIAWATGNVNFASYLHIPYIPYTSELVVVCTAIVGAGLGFLWFNTYPAQVFMGDVGSLALGGALGVIAVLVRQELVLVIMGGVFVMETLSVILQVGSYKLRGQRIFRMAPIHHHYELKGWPEPRVIVRFWIISMVLVLVGLATLKVR.

Transmembrane regions (helical) follow at residues 21–41, 73–93, 94–114, 132–152, 168–188, 199–219, 239–259, 263–283, 288–308, and 338–358; these read YLSFRAIASILTALCLSLWMG, TMGGVMILAAIIITVLMWADL, SNPYVWAVLVVLAGYGAVGFV, WKYFWQSAIALVVAFALYAHG, VMPQLGLLYIVLTYFVIVGTS, GLAIMPTVMVAAGFAVIAWAT, LVVVCTAIVGAGLGFLWFNTY, VFMGDVGSLALGGALGVIAVL, LVLVIMGGVFVMETLSVILQV, and VIVRFWIISMVLVLVGLATLK.

This sequence belongs to the glycosyltransferase 4 family. MraY subfamily. The cofactor is Mg(2+).

The protein resides in the cell inner membrane. The enzyme catalyses UDP-N-acetyl-alpha-D-muramoyl-L-alanyl-gamma-D-glutamyl-meso-2,6-diaminopimeloyl-D-alanyl-D-alanine + di-trans,octa-cis-undecaprenyl phosphate = di-trans,octa-cis-undecaprenyl diphospho-N-acetyl-alpha-D-muramoyl-L-alanyl-D-glutamyl-meso-2,6-diaminopimeloyl-D-alanyl-D-alanine + UMP. The protein operates within cell wall biogenesis; peptidoglycan biosynthesis. Functionally, catalyzes the initial step of the lipid cycle reactions in the biosynthesis of the cell wall peptidoglycan: transfers peptidoglycan precursor phospho-MurNAc-pentapeptide from UDP-MurNAc-pentapeptide onto the lipid carrier undecaprenyl phosphate, yielding undecaprenyl-pyrophosphoryl-MurNAc-pentapeptide, known as lipid I. The sequence is that of Phospho-N-acetylmuramoyl-pentapeptide-transferase from Vibrio atlanticus (strain LGP32) (Vibrio splendidus (strain Mel32)).